The following is a 291-amino-acid chain: Putative fatty acid elongase 4 (291 aa).

Helical transmembrane passes span 46–66, 79–99, and 254–274; these read ILFQ…FILI, FTLK…SIIA, and NLYL…QFFV.

The protein belongs to the ELO family.

Its subcellular location is the membrane. The catalysed reaction is a very-long-chain acyl-CoA + malonyl-CoA + H(+) = a very-long-chain 3-oxoacyl-CoA + CO2 + CoA. It functions in the pathway lipid metabolism; fatty acid biosynthesis. Functionally, could be implicated in synthesis of very long chain fatty acids. In Caenorhabditis elegans, this protein is Putative fatty acid elongase 4 (elo-4).